The chain runs to 629 residues: 1-deoxy-D-xylulose-5-phosphate synthase (629 aa).

Residues His73 and 114 to 116 (GHA) contribute to the thiamine diphosphate site. Asp145 serves as a coordination point for Mg(2+). Residues 146-147 (GA), Asn174, Tyr284, and Glu360 each bind thiamine diphosphate. Asn174 is a binding site for Mg(2+).

Belongs to the transketolase family. DXPS subfamily. As to quaternary structure, homodimer. Mg(2+) serves as cofactor. It depends on thiamine diphosphate as a cofactor.

The catalysed reaction is D-glyceraldehyde 3-phosphate + pyruvate + H(+) = 1-deoxy-D-xylulose 5-phosphate + CO2. Its pathway is metabolic intermediate biosynthesis; 1-deoxy-D-xylulose 5-phosphate biosynthesis; 1-deoxy-D-xylulose 5-phosphate from D-glyceraldehyde 3-phosphate and pyruvate: step 1/1. Functionally, catalyzes the acyloin condensation reaction between C atoms 2 and 3 of pyruvate and glyceraldehyde 3-phosphate to yield 1-deoxy-D-xylulose-5-phosphate (DXP). In Thermomicrobium roseum (strain ATCC 27502 / DSM 5159 / P-2), this protein is 1-deoxy-D-xylulose-5-phosphate synthase.